Here is a 543-residue protein sequence, read N- to C-terminus: MEMAKSIMFGEDARRSMQKGVDILADTVKVTMGPKGRNVVLDKKFGAPLITNDGVTIAREIELEDAYENMGAQLVKEVATKTNDVAGDGTTTATLLAQAIIREGLKNVTGGANPMLVRRGIQMAVEEAVKGIKEISKPVEGKEDIARVAAISADDKEIGKLIADAMEKVGNEGVITVEESNTMGTELDVVEGMQFDRGYVSPYMVTDTEKMEASLDDAYILITDKKITNIQEILPVLEQIVQQGKRLLIISEDIEGEALATLVVNKLRGTFTCVAVKAPGFGDRRKEMLEDIATLTGGQVISEEIGRDLKDVTVDMLGRAESVKITKETTTIVNGKGNKKEIEDRVNQIKAQIEETTSEFDREKLQERLAKLAGGVAVIKVGAATETELKERKLRIEDALAATKAAVEEGIIPGGGTAYAMVIKEVEKLNSETHDIKLGIDIVKKSLEEPVRQIACNAGVEGSIVIEKVKHSEAGIGYDALNNEYVNMIKAGIVDPTKVSRSALQNAASVASTFLTTEAAIADIPEKNDTPMPGAPGMMDGMY.

ATP is bound by residues 31–34 (TMGP), 88–92 (DGTTT), Gly415, 479–481 (DAL), and Asp495.

It belongs to the chaperonin (HSP60) family. As to quaternary structure, forms a cylinder of 14 subunits composed of two heptameric rings stacked back-to-back. Interacts with the co-chaperonin GroES.

It is found in the cytoplasm. It catalyses the reaction ATP + H2O + a folded polypeptide = ADP + phosphate + an unfolded polypeptide.. In terms of biological role, together with its co-chaperonin GroES, plays an essential role in assisting protein folding. The GroEL-GroES system forms a nano-cage that allows encapsulation of the non-native substrate proteins and provides a physical environment optimized to promote and accelerate protein folding. The protein is Chaperonin GroEL of Clostridium tetani (strain Massachusetts / E88).